The sequence spans 742 residues: MSENNFDIQSPPCVLCGWTDNCPEKYGEKRTYVEYNLTLHNYCLLMSSGIWQRGEENEGVDGFLIEDIRKEVNRAARLMCNICRKKGASIGCVAPKCKRSYHFPCGLQKECVFQFMEDFRSYCWEHKPVQIFSDKESREPSQCTICLDLVEHLPLYSVLRSPCCKNTWFHRECLQYQALSAGIFFFRCAVCNNKDKFQKEMLRMGIHIPEKDASWELEDNAYQDLLQCYQHCDIRRCLCKNGRDYNKPDSKWEIKRCQSCGSRGTHLACSSIKSWEQNWECVECRSIFAKGKYSKRKKHSLAPSEKMDGTTCLLEEPSPKLPRQSPGSQRNCLLQSPKIICQNNLSPCSLLELPTSNRVAMSLSPLMSNRNCSLRKKHLRMQRKEASNILKELKQQINTKTTRLNINTENIWNSALKGFRQRNFRPTNTIEVKFTNCKNRVKTDSFTGSKHLFFHLLMLHIQNSSLFEGSSAKNLSVDPQALKENLYFEAGKMIAVSLVHGGPSPGFFSKILFDCLVYGPENVKPNLDDVADAGVAQTIKKIKYSESLSSLQSTVRDCYDFLAAAGCLRPITSLRDKDMLVNDLLIHHVIKRIISPLESFRQGLKTLGLLEKMEMHQDAFSSLFCHKPENLSAEALCDLFTIHSSPDVNKVGAADFWMGYLQDVESGESVVTLQDILFFVTGCSSIPPIGFDPEPTIKFLPVHYPIGNRLLNCLELPITRTYENFKNKMEFTIRSTLRGERE.

Residues 10–50 (SPPCVLCGWTDNCPEKYGEKRTYVEYNLTLHNYCLLMSSGI) form a C2HC pre-PHD-type zinc finger. The segment at 78–127 (LMCNICRKKGASIGCVAPKCKRSYHFPCGLQKECVFQFMEDFRSYCWEHK) adopts a PHD-type 1 zinc-finger fold. The segment at 142-192 (QCTICLDLVEHLPLYSVLRSPCCKNTWFHRECLQYQALSAGIFFFRCAVCN) adopts a PHD-type 2; degenerate zinc-finger fold. The PHD-type 3 zinc finger occupies 236-285 (RCLCKNGRDYNKPDSKWEIKRCQSCGSRGTHLACSSIKSWEQNWECVECR). The 326-residue stretch at 417–742 (KGFRQRNFRP…IRSTLRGERE (326 aa)) folds into the HECT domain.

It localises to the nucleus. Its subcellular location is the nucleolus. The protein localises to the cytoplasm. The enzyme catalyses S-ubiquitinyl-[E2 ubiquitin-conjugating enzyme]-L-cysteine + [acceptor protein]-L-lysine = [E2 ubiquitin-conjugating enzyme]-L-cysteine + N(6)-ubiquitinyl-[acceptor protein]-L-lysine.. It functions in the pathway protein modification; protein ubiquitination. Its function is as follows. E3 ubiquitin-protein ligase which accepts ubiquitin from an E2 ubiquitin-conjugating enzyme in the form of a thioester and then directly transfers the ubiquitin to targeted substrates. Essential in early embryonic development to prevent apoptotic death. The protein is G2/M phase-specific E3 ubiquitin-protein ligase (G2E3) of Gallus gallus (Chicken).